Consider the following 429-residue polypeptide: Glutamate-1-semialdehyde 2,1-aminomutase 2 (429 aa).

N6-(pyridoxal phosphate)lysine is present on K268.

It belongs to the class-III pyridoxal-phosphate-dependent aminotransferase family. HemL subfamily. In terms of assembly, homodimer. Requires pyridoxal 5'-phosphate as cofactor.

The protein localises to the cytoplasm. The catalysed reaction is (S)-4-amino-5-oxopentanoate = 5-aminolevulinate. It functions in the pathway porphyrin-containing compound metabolism; protoporphyrin-IX biosynthesis; 5-aminolevulinate from L-glutamyl-tRNA(Glu): step 2/2. The protein is Glutamate-1-semialdehyde 2,1-aminomutase 2 of Bacillus mycoides (strain KBAB4) (Bacillus weihenstephanensis).